The chain runs to 153 residues: Ribosome maturation factor RimP (153 aa).

This sequence belongs to the RimP family.

It localises to the cytoplasm. Functionally, required for maturation of 30S ribosomal subunits. In Clostridium botulinum (strain Loch Maree / Type A3), this protein is Ribosome maturation factor RimP.